The primary structure comprises 30 residues: Cycloviolacin-O20 (30 aa).

Residues 1–30 (GIPCGESCVWIPCLTSAIGCSCKSKVCYRD) constitute a cross-link (cyclopeptide (Gly-Asp)). Intrachain disulfides connect Cys4–Cys20, Cys8–Cys22, and Cys13–Cys27.

Post-translationally, this is a cyclic peptide.

Probably participates in a plant defense mechanism. The polypeptide is Cycloviolacin-O20 (Viola odorata (Sweet violet)).